Here is a 502-residue protein sequence, read N- to C-terminus: MSIRAEEISALIKQQIENYQSEIEVSDVGTVIQVGDGIARAHGLDNVMAGELVEFSNGVMGLAQNLEENNVGIIILGPYTEIREGDEVRRTGRIMQVPVGKELIGRVVNPLGQPVDGLGPINTTNTRPIESPAPGVMDRKSVHEPLQTGIKAIDALVPIGRGQRELIIGDRQTGKTAVALDTIINQKDEDMICIYVAIGQKESTVRNVVETLRKHGALEYTIVVTASASQPAPLLYLAPYAGVTMGEEFMYNGKHVLVVYDDLSKQAAAYRELSLLLRRPPGREAYPGDVFYLHSRLLERAAKLSDAKGGGSLTALPFIETQAGDVSAYIPTNVISITDGQIFLQSDLFFSGVRPAIDAGTSVSRVGGSAQIKAMSKVSGTLRLDLASYRELEAFAQFGSDLDKATQAKLNRGARTVEVLKQGLHKPLRVEKQVIILYALTRGFLDDIPVVDITRFEEEFHAWLDSNATDLLEEIRTTKKLADDDKFAAAINGFKKVFVASE.

The segment at V115–G135 is disordered. G169–T176 contributes to the ATP binding site.

It belongs to the ATPase alpha/beta chains family. F-type ATPases have 2 components, CF(1) - the catalytic core - and CF(0) - the membrane proton channel. CF(1) has five subunits: alpha(3), beta(3), gamma(1), delta(1), epsilon(1). CF(0) has three main subunits: a(1), b(2) and c(9-12). The alpha and beta chains form an alternating ring which encloses part of the gamma chain. CF(1) is attached to CF(0) by a central stalk formed by the gamma and epsilon chains, while a peripheral stalk is formed by the delta and b chains.

It is found in the cell membrane. The catalysed reaction is ATP + H2O + 4 H(+)(in) = ADP + phosphate + 5 H(+)(out). Its function is as follows. Produces ATP from ADP in the presence of a proton gradient across the membrane. The alpha chain is a regulatory subunit. The protein is ATP synthase subunit alpha of Bacillus anthracis (strain A0248).